The chain runs to 146 residues: Large ribosomal subunit protein uL15 (146 aa).

Residues 1–13 (MKLHELHSAEGSR) are compositionally biased toward basic and acidic residues. Residues 1-55 (MKLHELHSAEGSRRNRKRVGRGTSSGYGKTSGRGQKGQLARQGGHTRLGFEGGQM) are disordered. Over residues 23–35 (TSSGYGKTSGRGQ) the composition is skewed to gly residues.

It belongs to the universal ribosomal protein uL15 family. In terms of assembly, part of the 50S ribosomal subunit.

Its function is as follows. Binds to the 23S rRNA. The chain is Large ribosomal subunit protein uL15 from Lactobacillus acidophilus (strain ATCC 700396 / NCK56 / N2 / NCFM).